The chain runs to 87 residues: Large ribosomal subunit protein bL27 (87 aa).

Residues 1–24 are disordered; the sequence is MAHKKGTGSTRNGRDSRSQRLGVK.

Belongs to the bacterial ribosomal protein bL27 family.

The protein is Large ribosomal subunit protein bL27 of Crocosphaera subtropica (strain ATCC 51142 / BH68) (Cyanothece sp. (strain ATCC 51142)).